Consider the following 362-residue polypeptide: 3-dehydroquinate synthase (362 aa).

NAD(+)-binding positions include 71–76 (DGEQYK), 105–109 (GVIGD), 129–130 (TT), Lys-142, Lys-151, and 169–172 (CLST). Glu-184, His-247, and His-264 together coordinate Zn(2+).

It belongs to the sugar phosphate cyclases superfamily. Dehydroquinate synthase family. The cofactor is Co(2+). Zn(2+) serves as cofactor. NAD(+) is required as a cofactor.

Its subcellular location is the cytoplasm. The catalysed reaction is 7-phospho-2-dehydro-3-deoxy-D-arabino-heptonate = 3-dehydroquinate + phosphate. Its pathway is metabolic intermediate biosynthesis; chorismate biosynthesis; chorismate from D-erythrose 4-phosphate and phosphoenolpyruvate: step 2/7. Functionally, catalyzes the conversion of 3-deoxy-D-arabino-heptulosonate 7-phosphate (DAHP) to dehydroquinate (DHQ). The polypeptide is 3-dehydroquinate synthase (Vibrio atlanticus (strain LGP32) (Vibrio splendidus (strain Mel32))).